Here is a 219-residue protein sequence, read N- to C-terminus: 2-hydroxy-3-keto-5-methylthiopentenyl-1-phosphate phosphatase (219 aa).

Belongs to the HAD-like hydrolase superfamily. MtnX family.

The enzyme catalyses 2-hydroxy-5-methylsulfanyl-3-oxopent-1-enyl phosphate + H2O = 1,2-dihydroxy-5-(methylsulfanyl)pent-1-en-3-one + phosphate. It participates in amino-acid biosynthesis; L-methionine biosynthesis via salvage pathway; L-methionine from S-methyl-5-thio-alpha-D-ribose 1-phosphate: step 4/6. Its function is as follows. Dephosphorylates 2-hydroxy-3-keto-5-methylthiopentenyl-1-phosphate (HK-MTPenyl-1-P) yielding 1,2-dihydroxy-3-keto-5-methylthiopentene (DHK-MTPene). This chain is 2-hydroxy-3-keto-5-methylthiopentenyl-1-phosphate phosphatase, found in Bacillus cereus (strain ATCC 10987 / NRS 248).